The chain runs to 480 residues: Reticulophagy regulator 1 (480 aa).

Over residues 1-10 the composition is skewed to basic and acidic residues; sequence MASPAPEEHA. Residues 1-41 are disordered; sequence MASPAPEEHATQGCPATEEQEPRPGVPGEEAGPEGAGPQVE. Residues 1–43 lie on the Cytoplasmic side of the membrane; the sequence is MASPAPEEHATQGCPATEEQEPRPGVPGEEAGPEGAGPQVEEA. A helical transmembrane segment spans residues 44-64; the sequence is AGRVAAALTWLLGEPVLWLGW. Over 65–78 the chain is Lumenal; sequence RADELLSWKRPLRS. The segment at 67-216 is reticulon homology domain; that stretch reads DELLSWKRPL…LLFAFLCPLF (150 aa). A helical membrane pass occupies residues 79 to 99; the sequence is LLAFLGANLLFWFLALTPWRV. At 100–101 the chain is on the cytoplasmic side; sequence YH. The helical transmembrane segment at 102 to 122 threads the bilayer; the sequence is LISVMILGRVIMQIIKDMVLS. At 123 to 191 the chain is on the lumenal side; that stretch reads RARGAQLWRS…LVCSVCTFFT (69 aa). At serine 132 the chain carries Phosphoserine. At serine 134 the chain carries Phosphoserine; by CAMK2B. Serine 136 carries the phosphoserine modification. A helical membrane pass occupies residues 192–212; it reads ILGSYIPGVILSYLLLLFAFL. The Cytoplasmic portion of the chain corresponds to 213–480; that stretch reads CPLFKCNDIG…GFLSNLLGGH (268 aa). The span at 302–313 shows a compositional bias: polar residues; sequence FNLSEGYTPQTD. The interval 302–348 is disordered; sequence FNLSEGYTPQTDTSDDLDRPSEEVFSRDLSDFPSLENGAGTNDEDEL. Basic and acidic residues predominate over residues 317–331; the sequence is DLDRPSEEVFSRDLS. The LIR motif motif lies at 436-441; that stretch reads DDFELL. The interval 450–480 is disordered; it reads ESELGLTQDQGAEAQQSKKSSGFLSNLLGGH. Over residues 454–473 the composition is skewed to polar residues; that stretch reads GLTQDQGAEAQQSKKSSGFL.

The protein belongs to the RETREG family. In terms of assembly, homooligomer; oligomerization is enhanced following endoplasmic reticulum stress and is mediated by the reticulon homology domain. Interacts with ATG8 family modifier proteins MAP1LC3A, MAP1LC3B, GABARAP, GABARAPL1 and GABARAPL2. Post-translationally, phosphorylation at Ser-134 by CAMK2B enhances oligomerization and membrane scission and reticulophagy activity.

Its subcellular location is the golgi apparatus. The protein resides in the cis-Golgi network membrane. The protein localises to the endoplasmic reticulum membrane. In terms of biological role, endoplasmic reticulum (ER)-anchored autophagy regulator which mediates ER delivery into lysosomes through sequestration into autophagosomes. Promotes membrane remodeling and ER scission via its membrane bending capacity and targets the fragments into autophagosomes via interaction with ATG8 family proteins. Active under basal conditions. Required for collagen quality control in a LIR motif-dependent manner. Required for long-term survival of nociceptive and autonomic ganglion neurons. The protein is Reticulophagy regulator 1 of Rattus norvegicus (Rat).